The following is a 63-amino-acid chain: uncharacterized protein (63 aa).

A helical membrane pass occupies residues 38–58 (ISLFIILHLCLLVCLLLSFYF).

Its subcellular location is the membrane. This is an uncharacterized protein from Saccharomyces cerevisiae (strain ATCC 204508 / S288c) (Baker's yeast).